We begin with the raw amino-acid sequence, 1376 residues long: DNA-directed RNA polymerase subunit beta (1376 aa).

This sequence belongs to the RNA polymerase beta chain family. The RNAP catalytic core consists of 2 alpha, 1 beta, 1 beta' and 1 omega subunit. When a sigma factor is associated with the core the holoenzyme is formed, which can initiate transcription.

It catalyses the reaction RNA(n) + a ribonucleoside 5'-triphosphate = RNA(n+1) + diphosphate. DNA-dependent RNA polymerase catalyzes the transcription of DNA into RNA using the four ribonucleoside triphosphates as substrates. This chain is DNA-directed RNA polymerase subunit beta, found in Methylorubrum extorquens (strain PA1) (Methylobacterium extorquens).